Here is a 32-residue protein sequence, read N- to C-terminus: Cytochrome b6-f complex subunit 7 (32 aa).

Residues 9–27 (AAVFWVLIPVGLLGGVLLL) form a helical membrane-spanning segment.

It belongs to the PetM family. As to quaternary structure, the 4 large subunits of the cytochrome b6-f complex are cytochrome b6, subunit IV (17 kDa polypeptide, PetD), cytochrome f and the Rieske protein, while the 4 small subunits are PetG, PetL, PetM and PetN. The complex functions as a dimer.

The protein localises to the cellular thylakoid membrane. Functionally, component of the cytochrome b6-f complex, which mediates electron transfer between photosystem II (PSII) and photosystem I (PSI), cyclic electron flow around PSI, and state transitions. This is Cytochrome b6-f complex subunit 7 from Prochlorococcus marinus (strain NATL1A).